The following is a 98-amino-acid chain: Small ribosomal subunit protein bS20 (98 aa).

Residues 1–12 (MAPRKPSKKVGP) are compositionally biased toward basic residues. The tract at residues 1–31 (MAPRKPSKKVGPQKRPSAEKRVITSKKKQLR) is disordered.

Belongs to the bacterial ribosomal protein bS20 family.

Its function is as follows. Binds directly to 16S ribosomal RNA. In Chlamydia trachomatis serovar A (strain ATCC VR-571B / DSM 19440 / HAR-13), this protein is Small ribosomal subunit protein bS20.